The sequence spans 147 residues: Putative protein CLUHP3 (147 aa).

The disordered stretch occupies residues 14–47 (KEPEGGRRRLSHPGNMGWMRPSQETTPPDRSHHS).

The polypeptide is Putative protein CLUHP3 (CLUHP3) (Homo sapiens (Human)).